A 236-amino-acid chain; its full sequence is Leucyl/phenylalanyl-tRNA--protein transferase (236 aa).

It belongs to the L/F-transferase family.

The protein localises to the cytoplasm. The enzyme catalyses N-terminal L-lysyl-[protein] + L-leucyl-tRNA(Leu) = N-terminal L-leucyl-L-lysyl-[protein] + tRNA(Leu) + H(+). The catalysed reaction is N-terminal L-arginyl-[protein] + L-leucyl-tRNA(Leu) = N-terminal L-leucyl-L-arginyl-[protein] + tRNA(Leu) + H(+). It carries out the reaction L-phenylalanyl-tRNA(Phe) + an N-terminal L-alpha-aminoacyl-[protein] = an N-terminal L-phenylalanyl-L-alpha-aminoacyl-[protein] + tRNA(Phe). Its function is as follows. Functions in the N-end rule pathway of protein degradation where it conjugates Leu, Phe and, less efficiently, Met from aminoacyl-tRNAs to the N-termini of proteins containing an N-terminal arginine or lysine. This is Leucyl/phenylalanyl-tRNA--protein transferase from Yersinia pseudotuberculosis serotype O:1b (strain IP 31758).